The chain runs to 955 residues: 2-oxoglutarate dehydrogenase E1 component (955 aa).

The protein belongs to the alpha-ketoglutarate dehydrogenase family. Homodimer. Part of the 2-oxoglutarate dehydrogenase (OGDH) complex composed of E1 (2-oxoglutarate dehydrogenase), E2 (dihydrolipoamide succinyltransferase) and E3 (dihydrolipoamide dehydrogenase); the complex contains multiple copies of the three enzymatic components (E1, E2 and E3). Requires thiamine diphosphate as cofactor.

It carries out the reaction N(6)-[(R)-lipoyl]-L-lysyl-[protein] + 2-oxoglutarate + H(+) = N(6)-[(R)-S(8)-succinyldihydrolipoyl]-L-lysyl-[protein] + CO2. Its function is as follows. E1 component of the 2-oxoglutarate dehydrogenase (OGDH) complex which catalyzes the decarboxylation of 2-oxoglutarate, the first step in the conversion of 2-oxoglutarate to succinyl-CoA and CO(2). The protein is 2-oxoglutarate dehydrogenase E1 component of Bacillus cereus (strain 03BB102).